We begin with the raw amino-acid sequence, 1249 residues long: MSTVVAQALHVFGLRPHVTNNVFFFDEQIIIFPSGNHCVKYNIDQKWQKFIAGSDKSQGMLALAISPNRRYLAISETVQEKPAVTIYELSSIPCRKRKVLNNFDFQVQKFTSMAFSPDSKYLLTQTSPPDSNLVYWLWEKQKVMAIIKADSQNNPIYQVSISSQDNSQVCITGSGVFKLLRFAEGTLKQINFQRGESSNYLAHAWVSEDRVIVGTDTGKLFLFESGDQRWETSIMVKESTSSRSLEVIQESESLIEFPPLSSPVSSVERMDITTNTQQQAMPQVFAIAAYSKGFACSAGPGRVLLFEKVEEKDFYRESREIRIPTDQQSNDPSQSDKQDVLCLCFSPSEETLIASTNKNQLYSITMSLTEISKGEAAHFEYLLYPLHSASITGLDTCIRKPLIATCSLDRSVRIWNYESNTLELYKEYQEEAYTVSLHPSGHYIVVGFADKLRLMNLLIDDIRPFKEYSVRGCKECSFSNGGHLFAAVNGNVIHIFTTTSLENINILKGHTGKIRSLVWNLDDSKLVSAGTDGAVYEWNLSTGKRETECVLKSCSYNSVTTSPDAKVIFAVGSDQTLKEISDSLILREIPAFDVIYTSITISHSGRMIFVGTSVGTIRAMKYPLSLQKEYNEYQAHAGPVMKMLLTFDDQFLLTVGEDGCLFTWKVFDKDGRGIKREREVGFAEEVLVTKTDMEEKAQIMLELKTRVEELKMENEYQLRLKDMNYTEKIKELTDKFIQEMESLKTKNQVLKTEKEKQDISHRERLEELVDKQTRELQDLECCNNQKLLLEYEKYQELQLKSQRMQEEYEKQLRDNDETKSQALEELTEFYEAKLQEKTGLLEEAQEDVRQQLREFEETKKQIEEDEDREIQDIKTKYERKLRDEKESNLRLKGETGIMRKKFSSLQKEIEERTNDIELLKSEQMKLQGIIRSLEKDIQGLKREIQERDETIQDKEKRIYDLKKKNQELEKFKFVLDYKIKELKKQIEPRENEIKVMKEQIQEMEAELERFHKQNTQLELNITELLQKLRATDQEMRKEQQKERDLEALVRRFKTDLHNCVAYIQEPGLLKEKIRGLFEKYVQRADMVEIAGLNSDLQQEYARQREHLERNLATLKKKVIKEGELHRTDYVRIMQENVSLIKEINELRRELKLTRSQIYDLESALKVSKKTRSQEVPESVISKDVVGSTSTMRLNEQEETGRIIEMQRLEIRRLRDQIQEQEQVPGFHTIAGVRLPSIVDSDVDFEVHTK.

WD repeat units follow at residues 105-148 (FQVQ…AIIK), 195-233 (GESSNYLAHAWVSEDRVIVGTDTGKLFLFESGDQRWETS), 335-374 (SDKQDVLCLCFSPSEETLIASTNKNQLYSITMSLTEISKG), 386-425 (LHSASITGLDTCIRKPLIATCSLDRSVRIWNYESNTLELY), 427-469 (EYQE…KEYS), 471-506 (RGCKECSFSNGGHLFAAVNGNVIHIFTTTSLENINI), 509-548 (GHTGKIRSLVWNLDDSKLVSAGTDGAVYEWNLSTGKRETE), and 635-674 (AHAGPVMKMLLTFDDQFLLTVGEDGCLFTWKVFDKDGRGI). Coiled coils occupy residues 690–1056 (KTDM…KTDL) and 1094–1165 (SDLQ…SALK).

The protein belongs to the CFAP57 family. In terms of assembly, may form homodimers. Associates with components of the nexin-dynein regulatory complex (N-DRC) and the CFAP184:CFAP263 complex. In terms of tissue distribution, predominanly expressed in testis, lung and skin. Weak expression in brain and kidney.

Its subcellular location is the cytoplasm. The protein resides in the cytoskeleton. It is found in the cilium axoneme. Associates with components of the nexin-dynein regulatory complex (N-DRC), a key regulator of ciliary/flagellar motility, and might act as an inner dynein arm (IDA) hub or linkage. The sequence is that of Cilia- and flagella-associated protein 57 from Mus musculus (Mouse).